Consider the following 217-residue polypeptide: Carbon disulfide hydrolase (217 aa).

3 residues coordinate Zn(2+): C39, H98, and C101. Positions 192 to 217 (DKEKRARTDCTPTPYGVKGNQPPRWK) are disordered.

The protein belongs to the beta-class carbonic anhydrase family. In terms of assembly, forms only homooctamers in solution. Zn(2+) is required as a cofactor.

The enzyme catalyses carbon disulfide + 2 H2O = 2 hydrogen sulfide + CO2 + 2 H(+). Its pathway is sulfur metabolism; hydrogen sulfide biosynthesis. In terms of biological role, catalyzes the conversion of carbon disulfide into hydrogen sulfide and carbon dioxide, with carbonyl sulfide as an intermediate. Likely plays a key role in sulfur metabolism that allows A.thiooxidans S1p to grow on carbon disulfide as the main carbon and energy source. Does not show carbonic anhydrase activity (hydration of CO(2) to carbonate). The protein is Carbon disulfide hydrolase of Acidithiobacillus thiooxidans (Thiobacillus thiooxidans).